We begin with the raw amino-acid sequence, 458 residues long: Transmembrane protein 135 (458 aa).

The next 6 helical transmembrane spans lie at 68–88, 96–116, 149–169, 298–318, 331–351, and 377–397; these read ILQSASFLTANGALYITFFCI, FYSWTPGFGAALPASYVAILI, TLRNGEVLLFCITAAMYMFFF, FQLGAFLGSFVSIYKGTSCFL, IVAGFLAGVSMMFYKSTTISM, and ADTIIYSISTAICFHAAVMEV.

This sequence belongs to the TMEM135 family.

Its subcellular location is the mitochondrion membrane. The protein localises to the peroxisome membrane. Involved in mitochondrial metabolism by regulating the balance between mitochondrial fusion and fission. May act as a regulator of mitochondrial fission that promotes DNM1L-dependent fission through activation of DNM1L. May be involved in peroxisome organization. The protein is Transmembrane protein 135 of Mus musculus (Mouse).